A 252-amino-acid chain; its full sequence is Imidazole glycerol phosphate synthase subunit HisF (252 aa).

Residues aspartate 11 and aspartate 130 contribute to the active site.

The protein belongs to the HisA/HisF family. In terms of assembly, heterodimer of HisH and HisF.

It localises to the cytoplasm. It carries out the reaction 5-[(5-phospho-1-deoxy-D-ribulos-1-ylimino)methylamino]-1-(5-phospho-beta-D-ribosyl)imidazole-4-carboxamide + L-glutamine = D-erythro-1-(imidazol-4-yl)glycerol 3-phosphate + 5-amino-1-(5-phospho-beta-D-ribosyl)imidazole-4-carboxamide + L-glutamate + H(+). It functions in the pathway amino-acid biosynthesis; L-histidine biosynthesis; L-histidine from 5-phospho-alpha-D-ribose 1-diphosphate: step 5/9. In terms of biological role, IGPS catalyzes the conversion of PRFAR and glutamine to IGP, AICAR and glutamate. The HisF subunit catalyzes the cyclization activity that produces IGP and AICAR from PRFAR using the ammonia provided by the HisH subunit. The chain is Imidazole glycerol phosphate synthase subunit HisF from Acinetobacter baylyi (strain ATCC 33305 / BD413 / ADP1).